The following is a 99-amino-acid chain: Aspartyl/glutamyl-tRNA(Asn/Gln) amidotransferase subunit C (99 aa).

This sequence belongs to the GatC family. Heterotrimer of A, B and C subunits.

The enzyme catalyses L-glutamyl-tRNA(Gln) + L-glutamine + ATP + H2O = L-glutaminyl-tRNA(Gln) + L-glutamate + ADP + phosphate + H(+). It catalyses the reaction L-aspartyl-tRNA(Asn) + L-glutamine + ATP + H2O = L-asparaginyl-tRNA(Asn) + L-glutamate + ADP + phosphate + 2 H(+). Functionally, allows the formation of correctly charged Asn-tRNA(Asn) or Gln-tRNA(Gln) through the transamidation of misacylated Asp-tRNA(Asn) or Glu-tRNA(Gln) in organisms which lack either or both of asparaginyl-tRNA or glutaminyl-tRNA synthetases. The reaction takes place in the presence of glutamine and ATP through an activated phospho-Asp-tRNA(Asn) or phospho-Glu-tRNA(Gln). The chain is Aspartyl/glutamyl-tRNA(Asn/Gln) amidotransferase subunit C from Variovorax paradoxus (strain S110).